Consider the following 144-residue polypeptide: 3-hydroxyacyl-[acyl-carrier-protein] dehydratase FabZ (144 aa).

Residue His-49 is part of the active site.

This sequence belongs to the thioester dehydratase family. FabZ subfamily.

The protein resides in the cytoplasm. It carries out the reaction a (3R)-hydroxyacyl-[ACP] = a (2E)-enoyl-[ACP] + H2O. Involved in unsaturated fatty acids biosynthesis. Catalyzes the dehydration of short chain beta-hydroxyacyl-ACPs and long chain saturated and unsaturated beta-hydroxyacyl-ACPs. This Alkaliphilus oremlandii (strain OhILAs) (Clostridium oremlandii (strain OhILAs)) protein is 3-hydroxyacyl-[acyl-carrier-protein] dehydratase FabZ.